The primary structure comprises 92 residues: Small ribosomal subunit protein uS19 (92 aa).

The protein belongs to the universal ribosomal protein uS19 family.

Its function is as follows. Protein S19 forms a complex with S13 that binds strongly to the 16S ribosomal RNA. The chain is Small ribosomal subunit protein uS19 from Sulfurovum sp. (strain NBC37-1).